Reading from the N-terminus, the 160-residue chain is 6,7-dimethyl-8-ribityllumazine synthase (160 aa).

5-amino-6-(D-ribitylamino)uracil is bound by residues phenylalanine 23, 61-63 (SFE), and 85-87 (AVI). (2S)-2-hydroxy-3-oxobutyl phosphate is bound at residue 90 to 91 (DT). Histidine 93 (proton donor) is an active-site residue. Position 118 (phenylalanine 118) interacts with 5-amino-6-(D-ribitylamino)uracil. Arginine 132 provides a ligand contact to (2S)-2-hydroxy-3-oxobutyl phosphate.

The protein belongs to the DMRL synthase family.

It carries out the reaction (2S)-2-hydroxy-3-oxobutyl phosphate + 5-amino-6-(D-ribitylamino)uracil = 6,7-dimethyl-8-(1-D-ribityl)lumazine + phosphate + 2 H2O + H(+). The protein operates within cofactor biosynthesis; riboflavin biosynthesis; riboflavin from 2-hydroxy-3-oxobutyl phosphate and 5-amino-6-(D-ribitylamino)uracil: step 1/2. Catalyzes the formation of 6,7-dimethyl-8-ribityllumazine by condensation of 5-amino-6-(D-ribitylamino)uracil with 3,4-dihydroxy-2-butanone 4-phosphate. This is the penultimate step in the biosynthesis of riboflavin. This is 6,7-dimethyl-8-ribityllumazine synthase from Synechococcus sp. (strain CC9311).